The following is a 926-amino-acid chain: Chitin synthase-like protein 2 (926 aa).

Residues 1-56 are disordered; it reads MSFQNPSYINAKHRSFLQPKDTQDSQDLRNWVSHSSVDEETAYSSSTLSSSSSKSF. Residues 44 to 55 are compositionally biased toward low complexity; that stretch reads SSSTLSSSSSKS. 7 consecutive transmembrane segments (helical) span residues 564-584, 599-619, 641-661, 671-691, 721-741, 853-873, and 885-905; these read INSSFSLAVYVIVDFFSLWTT, LVFAIEKLVNFFSMANFFLAF, LFLVFEYILICLIFSQFMLAM, LLFISTALFSIIMIYFVFCVF, LLILACYAFVSLICMDPFFIF, VLVWAVSNLILAIVLIQVFDG, and IFWSIVAFTAWKTMGAVTFIA.

Belongs to the chitin synthase family.

The protein resides in the membrane. Functionally, plays a role in septum formation. Has no chitin synthase activity. This chain is Chitin synthase-like protein 2 (chs2), found in Schizosaccharomyces pombe (strain 972 / ATCC 24843) (Fission yeast).